Here is an 802-residue protein sequence, read N- to C-terminus: Epithelial sodium channel subunit delta (802 aa).

Over 1 to 250 (MRAVLSQKTT…CSRGNRLKTT (250 aa)) the chain is Cytoplasmic. Residues 145–211 (KQPHGGALTS…PPPPKEGHQE (67 aa)) form a disordered region. Residues 166–176 (CHLKGWQHRPT) show a composition bias toward basic residues. Positions 192-205 (PPRPGPPSAPPPPP) are enriched in pro residues. The chain crosses the membrane as a helical span at residues 251-271 (SWGLLSLGALVALCWQLGLLF). Over 272-694 (ERHWHRPVLM…VPQLLSAMGS (423 aa)) the chain is Extracellular. Residues asparagine 330 and asparagine 548 are each glycosylated (N-linked (GlcNAc...) asparagine). Residues 695–715 (LCSLWFGASVLSLLELLELLL) form a helical membrane-spanning segment. Residues 716-802 (DASALTLVLG…GPQPLETLDT (87 aa)) are Cytoplasmic-facing. Residues 738–777 (RASPASGASSIKPEASQMPPPAGGTSDDPEPSGPHLPRVM) are disordered.

This sequence belongs to the amiloride-sensitive sodium channel (TC 1.A.6) family. SCNN1D subfamily. In terms of assembly, can form an alternative heterotrimeric epithelial sodium channel (ENaC), composed of a delta (SCNN1D), beta (SCNN1B), and gamma (SCNN1G) subunit, where the delta (SCNN1D) subunit replaces the alpha (SCNN1A) subunit. In terms of tissue distribution, not specifically expressed in epithelial cells.

It is found in the apical cell membrane. The catalysed reaction is Na(+)(in) = Na(+)(out). Its activity is regulated as follows. Originally identified and characterized by its inhibition by the diuretic drug amiloride. Its function is as follows. Potential alternative pore-forming subunit of the epithelial sodium channel (ENaC), capable of replacing the alpha/SCNN1A subunit, creating a more active channel with distinct properties. ENaC functions in epithelial tissues, where it facilitates the electrodiffusion of sodium ions from the extracellular fluid through the apical membrane of cells, with water following osmotically, regulating sodium balance and fluid homeostasis. This subunit could also function independently as a sodium channel or assemble into other tissue-specific heterotrimeric sodium channels. Functionally, ENaC channels including this isoform exhibit greater conductance. This is Epithelial sodium channel subunit delta from Homo sapiens (Human).